Reading from the N-terminus, the 353-residue chain is UPF0283 membrane protein YcjF (353 aa).

The next 3 helical transmembrane spans lie at 70-90 (MVMG…VQWT), 100-120 (VALG…GSVV), and 213-233 (ESTL…FIAW).

The protein belongs to the UPF0283 family.

Its subcellular location is the cell inner membrane. In Escherichia fergusonii (strain ATCC 35469 / DSM 13698 / CCUG 18766 / IAM 14443 / JCM 21226 / LMG 7866 / NBRC 102419 / NCTC 12128 / CDC 0568-73), this protein is UPF0283 membrane protein YcjF.